A 588-amino-acid polypeptide reads, in one-letter code: Serine/threonine-protein phosphatase 2A 65 kDa regulatory subunit A alpha isoform (588 aa).

HEAT repeat units follow at residues alanine 2–glutamate 42, arginine 44–glycine 80, isoleucine 81–glutamate 119, aspartate 158–serine 196, threonine 197–proline 235, glutamine 236–proline 274, aspartate 275–proline 313, leucine 315–lysine 352, aspartate 353–isoleucine 391, leucine 393–isoleucine 430, phenylalanine 432–proline 469, glutamate 470–serine 508, glutamate 509–glutamine 547, and valine 549–alanine 586.

This sequence belongs to the phosphatase 2A regulatory subunit A family. As to quaternary structure, PP2A consists of a common heterodimeric core enzyme, composed of a 36 kDa catalytic subunit (subunit C) and a 65 kDa constant regulatory subunit (subunit A), that associates with a variety of regulatory subunits such as subunits B (the R2/B/PR55/B55, R3/B''/PR72/PR130/PR59 and R5/B'/B56 families) and the regulatory subunits TON2. Interacts with CYP20-1/ROC7. Also interacts with phosphatidic acid (PA), a lipid signaling molecule. Interacts with CHIP. Interacts with SIC/RON3. Ubiquitinated. CHIP-mediated ubiquitination enhances phosphatase activity after an abiotic stress such as low temperature or darkness. Mostly expressed in cell-dividing tissues such as apical meristems. Ubiquitous, with higher levels in roots and flowers (at protein level).

The protein resides in the cytoplasm. It is found in the cytosol. The protein localises to the nucleus. Its function is as follows. The A subunit of protein phosphatase 2A serves as a scaffolding molecule to coordinate the assembly of the catalytic subunit and a variable regulatory B subunit. Seems to act as a positive regulator of PP2A catalytic activity. Confers resistance to phosphatase inhibitors such as okadaic acid and cantharidin. Involved during developmental process such as seedling and floral developments, root gravitropism, and stomatal opening regulation. Involved in the regulation of auxin efflux, especially during basipetal (tips to base) auxin transport in roots, and appears to contribute to the perception of auxin efflux inhibitors such as 1-N-naphthylphthalamic acid (NPA) and to semicarbazone I (substituted phenylsemicarbazone of 2-acetylarylcarboxylic acids) (SCB-I). Modulates the magnitude of ethylene response in the hypocotyl and stem, and functions as a general positive transducer of early ABA signaling. The holoenzyme composed of PP2AA1, PP2A4 and B'ZETA or B'ETA acts as a negative regulator of plant innate immunity by controlling BAK1 phosphorylation state and activation in surface-localized immune receptor complexes. In Arabidopsis thaliana (Mouse-ear cress), this protein is Serine/threonine-protein phosphatase 2A 65 kDa regulatory subunit A alpha isoform (PP2AA1).